A 3133-amino-acid chain; its full sequence is MRGGRDPVPVPVLGDYAMVCAKNGIILQWRYNVKECELSCTGGQQYTVCADSCLRKCSDTALAASGQCKPVCVEGCACSPSQLLDDNGVCVPVAKCPCIHKGLQFNAGYKEIRPGRRERELCTCVGARWDCKPATPEEIQNYPPAEDLRSNSTAQNMEFTTCETSEPLTCKNMHLPPSTQTAECRPGCQCKKGQVLDTASKRCVPATQCPCHHAGRSYPDGHLMQEECNKCECKNGNWSCTQRKCAGVCGAWGDSHVNTFDGTQYDFEGVCTYLLAKGAMDGTDGFDVEIQNVPCGTTGATCSKSVTLKVGGAGNEEIVSLTKNAPIPDISKLKRIKMRKAGAYVFLDVPSLGMSLQWDRGLRVYVKIDTMWQGRVKGLCGNYNGDMRDDFQTPSGGGMSESSALIFADSWKLKPTCPKPQPVIDHCKQRPERKEWAQSVCGALKRYPFSLCAGEVGAGAYVARCERDACDAGADCECACAALAAYAHACAHRGVTFNWRTNDLCPMQCDEVCSNYDSCVSACPVETCDNILYYAETTARCEQDTCVEGCKPKKSCPEGSVYKNDSTTECVPRAKCKPVCMTLDGGREVLEGEIIEEDACHTCRCSKKHKVCTGQPCSTEAPRIQATSSSAEPATERPHEPLKCVTGWTPWINRGPAEIGPDGQSVESEPLPKPNELQIGKPMCKPEMMKKIECRTVNDHKTPKETGLNVECSLENGLVCEEPEKTCPDFEIKVYCECEEPQDTSPPVTVTSEASSEPVSTTLATTTSRCPPGEVYQACAYKCDRLCDHFKKTLIAKGRCISEMCVDGCVDESVASNGCEGSSRWRDERTCVPVKDCTCYNDGQIVKPGGVTESGCIKCQCLDNSLYCDSKDCVSLNIPHQGSTHLPYIVRPVSTTITSTTTTTTTSTTTTTTTPEPTETTTETTVPLIIKSTVSPPPECSPDNYIDLVMGDEPLPDTAFSASSEFSEIFAPHNARLNRGPTNSGAGSWNPKVNNDKQYIQVELPRREPIYGVVLQGSPIFDQYVTSYEIMYGDDGNTFSTVDGPDGKPKIFRGPIDNTHPVKQMISPPIEAKVVRIRPLTWHDEISLRLEIIGCAEPLTTETSEPSPTSESPLQCTEPLGLIGELPLENIQVSSNSEEKDYLSINGNRGWKPLYNTPGWVMFDFTGPRNITGILTKGGNDGWVTSYKVLYTSDFETFNPVIDKDGKEKIFPANFDGIVSVTNEFHPPIRARYLKVLPQKWNKNIELRIEPIGCFEPYPEILRSLPEEEEGREEPQVVRKEYGMSQEREMPNCHICPGVEAKECTCSYPEYFDGENCVPRAECPCVESFMTYPVGSTFRGANCDECVCKLGGTTECKPFKECQCDDESLVPKLSPTTCDCTCEPCTNGTKICKTSKLCLALESWCDGVQDCPDDERDCTTSTARTTTTEPTVVTTVAPTQAATAPPTTTTPKPVVECPKVECPPGYIISYTTGSSSSYSRAFSSDLPPPRPRYSYQRYYRGRSTGGYSGYAKTGYSKGGFSKGGFSKGGYGYPSIPRSNQAFTLDKPALTNKQPTSKEECAQFKCISKLPAFKPGVVPPPVACSVVTCPAGYTLKLDKVPTGYNKCPQYECVPPLERPVFCNMTGRTFNTFDGMEYKYDVCFHMLARDNKFDAWLIIVRKNCRLDGCTNELIVMQDDQLIQVKPNMMVTYNNYEYTIEQTKKICFQKNSFDVDRLGNGISITSRKYNFTVLFNKEGDVKIGVLKKHMGGVDGLCGAYDGSLANERRLPDGRVATSIDEFGRSWAKPGVPADACAPRVASAHKQRRAWDLCNVIAEEPFSQCGKVLNLDKWRHICLEKICECTDLVVNGTKRTEEQCRCLVLQQMAAECLAADAGVDLASWRLMMDCPADCPPPLVHYDCYRKRCEETCAPYPNAARACPAQEGQCSPGCYCPDGKLRKGDQCVLPADCLDCTCTGVGTPAKYTTFEGDDLPFLGNCTYLASRDRNQTGEHKYQVYATNGPCDDNANIVCTKIVHLIYEKNVIHISKDPTTKKLRTVIGKTAVFKYPVKENWGTISLLNGQDVSVTLPDIHVELTVSQLNLEFAVRVPTFLYGNRTEGLCGVCAGYQDFLVTSNGTVTDDFDLYGKSWQASPEKLTELEVPSDEQCDAPPPPAPCTPPPPDNNTCYHLYNADRFGACHALVEPQPYVESCEADECGGHGPCDALQRYAAACAELGLCLPDWRRELCPYPCEEPFVYRACVDCERTCDNYEQLQTSPEKCTNKPVEGCFCPEGKVRVNNTCIEPGKCFPCGVDGHYAGDEWQEDASTLCACARSPHGTALVGCRATSCAPPVCAHGEDLRTAPPPPGQCCPEYDCVAKPEAQCKETKKIVCDYGQVLKQKTNPSGCKEYFCECKPSSECEVIPPESEVEIVEAGIHREIDNSGCCPRVSLVCRPETCPKPPHCPQFQTLASVNITGKCCPEYKCELPKDKCIVTLEWEAAAKGGEKPREKPQTVLKDLEAVWLDGPCRSCECALSGAGPAATCAVSACPAVVSSELFVLEPRPVPFACCPEPVQVACRHQDNVYKVGEKWKSPTDVCETYECAADGDGKLQRLAAVQRCDRHCQPGWKYVPAEADSGQCCGKCEPVACVVDGEEKPIGEKWTSSDFCTNFTCVNLNGTLQVQSSNETCPEISDAERKQFVLKEQKVPGKCCPKIEREACTSGRSDIPGRRELDVDRELVRELPMRAGRGRRPALRGLRAALRDRLPTRLEVLPAPAECCGRCKPSPASWKGGRGPSGRARERPVGESWTSADFCTNYTCADLHGTLQVQSSNETCPEVSEAVKKQFVLKEEKIPGKCCPKVEPVACRDGDKIYQEVQVWTTPDPCTNRTCRREDGQLSVGRTVEHCERQCRRGWTYSPPAADHCCGRCVQSACLVDDQLKEPGSTWSSADNCTTFSCDRSGEEVFVTSATEHCPDVSACDPADIVNTTCCQICNEKPQALSKCVLRASELRHCRSDPHPMGAHGLCVNKFPITGFTEVHGSCDSGTIYNNQTGTHESACECCQAAKYSGVSVRLTCEDGTVRPHRVATPARCHCAACGPGLTKHPKPGHASYTGTKNPVQPERDREYVIPDISSASGEARRNHDSNYITTLIISF.

Residues 40 to 96 (CTGGQQYTVCADSCLRKCSDTALAASGQCKPVCVEGCACSPSQLLDDNGVCVPVAKC) form the TIL 1 domain. Residue asparagine 151 is glycosylated (N-linked (GlcNAc...) asparagine). One can recognise a TIL 2 domain in the interval 153-209 (TAQNMEFTTCETSEPLTCKNMHLPPSTQTAECRPGCQCKKGQVLDTASKRCVPATQC). N-linked (GlcNAc...) asparagine glycosylation is present at asparagine 237. The region spanning 247-418 (GVCGAWGDSH…DSWKLKPTCP (172 aa)) is the VWFD 1 domain. 3 cysteine pairs are disulfide-bonded: cysteine 249–cysteine 380, cysteine 271–cysteine 417, and cysteine 295–cysteine 302. The 68-residue stretch at 509–576 (CDEVCSNYDS…TTECVPRAKC (68 aa)) folds into the TIL 3 domain. N-linked (GlcNAc...) asparagine glycosylation occurs at asparagine 564. A disordered region spans residues 661 to 680 (PDGQSVESEPLPKPNELQIG). Residues 770–837 (CPPGEVYQAC…ERTCVPVKDC (68 aa)) form the TIL 4 domain. Positions 899–924 (STTTTTTTSTTTTTTTPEPTETTTET) are disordered. Intrachain disulfides connect cysteine 940–cysteine 1095 and cysteine 1116–cysteine 1254. F5/8 type C domains follow at residues 940-1095 (CSPD…IIGC) and 1116-1254 (CTEP…PIGC). N-linked (GlcNAc...) asparagine glycans are attached at residues asparagine 1170, asparagine 1387, asparagine 1622, asparagine 1727, and asparagine 1847. The VWFD 2 domain maps to 1619–1794 (VFCNMTGRTF…KPGVPADACA (176 aa)). 2 cysteine pairs are disulfide-bonded: cysteine 1621–cysteine 1754 and cysteine 1641–cysteine 1793. In terms of domain architecture, TIL 5 spans 1890-1948 (CPPPLVHYDCYRKRCEETCAPYPNAARACPAQEGQCSPGCYCPDGKLRKGDQCVLPADC). Residues 1951 to 2136 (CTCTGVGTPA…WQASPEKLTE (186 aa)) enclose the VWFD 3 domain. Disulfide bonds link cysteine 1953-cysteine 2099 and cysteine 2001-cysteine 2009. Residues asparagine 1975 and asparagine 1985 are each glycosylated (N-linked (GlcNAc...) asparagine). Asparagine 2093, asparagine 2113, asparagine 2161, asparagine 2276, and asparagine 2451 each carry an N-linked (GlcNAc...) asparagine glycan. In terms of domain architecture, TIL 6 spans 2229–2285 (CEEPFVYRACVDCERTCDNYEQLQTSPEKCTNKPVEGCFCPEGKVRVNNTCIEPGKC). One can recognise a VWFC 1 domain in the interval 2553 to 2622 (VACRHQDNVY…DSGQCCGKCE (70 aa)). Asparagine 2647, asparagine 2654, asparagine 2663, asparagine 2794, asparagine 2810, asparagine 2865, asparagine 2929, asparagine 2964, and asparagine 3028 each carry an N-linked (GlcNAc...) asparagine glycan. The VWFC 2 domain occupies 2842-2907 (VACRDGDKIY…AADHCCGRCV (66 aa)). Disulfide bonds link cysteine 2971/cysteine 3040, cysteine 2991/cysteine 3054, cysteine 3004/cysteine 3070, and cysteine 3020/cysteine 3072. The CTCK domain maps to 2971 to 3076 (CNEKPQALSK…PARCHCAACG (106 aa)).

May be converted into the 260 kDa mature hemocytin by proteolysis.

Its function is as follows. Adhesive protein and relates to hemostasis or encapsulation of foreign substances for self-defense. This Bombyx mori (Silk moth) protein is Hemocytin.